Consider the following 141-residue polypeptide: MKTARRRSRELAVQAVYQSLINRTAAPEIAKNIREMPDFAKADEELFNKLFFGTQTNAADYIQKIRPLLDRDEKDLNPIERAVLLTACHELSAMPETPYPVIINEAIEVTKTFGGTDGHKFVNGILDKLAAQIRPDEPKRR.

Belongs to the NusB family.

Functionally, involved in transcription antitermination. Required for transcription of ribosomal RNA (rRNA) genes. Binds specifically to the boxA antiterminator sequence of the ribosomal RNA (rrn) operons. The chain is Transcription antitermination protein NusB from Neisseria meningitidis serogroup C (strain 053442).